The chain runs to 188 residues: Probable thiol:disulfide interchange protein DsbE-2 (188 aa).

The Cytoplasmic segment spans residues 1–11; the sequence is MSMLHQQKRKN. A helical membrane pass occupies residues 12-32; it reads HFVFLPLVILLAVCALLFIGL. Topologically, residues 33–188 are periplasmic; the sequence is QQDPQKIASA…KLEAENAKVR (156 aa). Residues 42–179 form the Thioredoxin domain; it reads ALIGKPVPTF…QEMFIPEWQK (138 aa). Cysteines 82 and 85 form a disulfide.

It belongs to the thioredoxin family. DsbE subfamily.

Its subcellular location is the cell inner membrane. In terms of biological role, could be involved in disulfide bond formation. Could catalyzes a late, reductive step in the assembly of periplasmic NrfA c-type cytochrome, probably the reduction of disulfide bonds of the apocytochrome c to allow covalent linkage with the heme. Possible subunit of a heme lyase. The sequence is that of Probable thiol:disulfide interchange protein DsbE-2 (nrfX) from Pasteurella multocida (strain Pm70).